Here is a 517-residue protein sequence, read N- to C-terminus: Retrotransposon-like protein 1 (517 aa).

Disordered regions lie at residues 1-29 (MEVN…QQQL) and 142-161 (EEER…DARS).

This Caenorhabditis elegans protein is Retrotransposon-like protein 1 (retr-1).